Consider the following 443-residue polypeptide: Transmembrane protein 184C (443 aa).

7 helical membrane passes run 15–35, 46–66, 84–104, 182–202, 210–230, 252–272, and 284–304; these read LVVLLYIVGLIVGVPICIWKL, AWFIAGIFVLMTIPISLWGIL, ILWMVPIYSVDSWIALKYPDI, PVTTVIALICQLTGVYGEGDF, YLVIINNVSQVFAMYCLVLFY, VVFVSFWQAVFIAILVKAGVI, and VATGLQDFIICVEMFLAAVAH. The span at 369-378 shows a compositional bias: polar residues; that stretch reads TSLLSSSTQD. Residues 369–422 form a disordered region; sequence TSLLSSSTQDPISAASSIPPSPSGHYQGFGQTITPQTTPTATTMPEELYSADSP. Residues 399-411 show a composition bias toward low complexity; that stretch reads QTITPQTTPTATT.

This sequence belongs to the TMEM184 family.

The protein localises to the membrane. Its function is as follows. May play a role in cell growth. The sequence is that of Transmembrane protein 184C (tmem184c) from Xenopus tropicalis (Western clawed frog).